A 331-amino-acid polypeptide reads, in one-letter code: Protein FLX-like 1 (331 aa).

The segment at 1–51 (MSGRNRGPPPPSMKGGSYSGLQAPVHQPPFVRGLGGGPVPPPPHPSMIDDS) is disordered. Residues 69–252 (ILEDRLAAQN…AEIANSETSA (184 aa)) adopt a coiled-coil conformation. The span at 306–321 (QAAWAGGYDPQQQQQQ) shows a compositional bias: low complexity. Residues 306–331 (QAAWAGGYDPQQQQQQQPPPQGQGHR) are disordered. A compositionally biased stretch (pro residues) spans 322-331 (QPPPQGQGHR).

It belongs to the FLX family. In terms of assembly, interacts with FRI.

Its function is as follows. Has no transcriptional activation activity. This chain is Protein FLX-like 1 (FLXL1), found in Arabidopsis thaliana (Mouse-ear cress).